Consider the following 1135-residue polypeptide: Topless-related protein 4 (1135 aa).

The LisH domain occupies 4 to 36 (LSRELVFLILQFLDEEKFKDTVHRLEKESGFFF). One can recognise a CTLH domain in the interval 34–92 (FFFNMRYFEDSVTAGEWDDVEKYLSGFTKVDDNRYSMKIFFEIRKQKYLEALDKKDHAK). Ser-214 carries the post-translational modification Phosphoserine. Residues 281-303 (LKRERPRSPPTNSLSMDYQTADS) form a disordered region. A compositionally biased stretch (polar residues) spans 290-303 (PTNSLSMDYQTADS). WD repeat units follow at residues 355 to 395 (SQGS…KLVS), 417 to 456 (EYTAAVNRVVWSPDGGLLGVAYSKHIVHIYSYHGGEDLRN), 462 to 503 (AHAG…KLHT), 506 to 547 (GHEA…SRVD), 550 to 593 (APGR…VKRT), 597 to 636 (LGKRSVGVVQFDTMKNKFLVAGDEFQVKFWDMDSVDLLSS), 638 to 680 (AAEG…RILH), 776 to 815 (LLPARVVKLIYTNSGGAILALAENAAHKLWKWQKSERNLL), 843 to 881 (NKEDVVPCFALSKNDSYVMSASGGKISLFNMMTFKTMTT), 884 to 924 (APPP…VKSK), 927 to 966 (GHQKRVTGLAFSNVLNVLVSSGADSQLCVWSMDGWEKQAS), and 1020 to 1059 (ESSGSVTDAVYSCDSQSIYAAFDDGSVSILTATTLQLKCR). Residues 1095 to 1135 (DGGVHVIEPPGPEGKWGISAPPENGAGPSVSSAPGSDQQPR) are disordered. Low complexity predominate over residues 1119–1135 (GAGPSVSSAPGSDQQPR).

Tetramer. Interacts with WUS (via the C-terminal domain). Interacts with SPL (via EAR motif). Interacts with SPEAR3/TIE1. Binds to and corepresses GAF1/IDD2 at the promoter of GA20OX2 gene.

It localises to the nucleus. Functionally, transcription corepressor of Zinc finger transcription factors GAF1/IDD2 and ENY/IDD1 in regulation of gibberellin homeostasis and signaling. The sequence is that of Topless-related protein 4 (TPR4) from Arabidopsis thaliana (Mouse-ear cress).